The chain runs to 343 residues: L-rhamnose-proton symporter (343 aa).

A run of 10 helical transmembrane segments spans residues Ala-4 to Ala-24, Trp-38 to Leu-58, Phe-68 to Ile-88, Met-101 to Leu-121, Thr-137 to Leu-157, Leu-175 to Ala-195, Ile-207 to Ile-227, Leu-254 to Phe-274, Met-289 to Leu-309, and Val-320 to Gly-340.

The protein belongs to the L-rhamnose transporter (TC 2.A.7.6) family.

It localises to the cell inner membrane. The enzyme catalyses L-rhamnopyranose(in) + H(+)(in) = L-rhamnopyranose(out) + H(+)(out). Functionally, uptake of L-rhamnose across the cytoplasmic membrane with the concomitant transport of protons into the cell (symport system). The chain is L-rhamnose-proton symporter from Yersinia pestis bv. Antiqua (strain Antiqua).